The chain runs to 473 residues: Chromosomal replication initiator protein DnaA (473 aa).

The domain I, interacts with DnaA modulators stretch occupies residues 1-87 (MADGEESISV…LAVTTFAIVV (87 aa)). Residues 87-132 (VNPEIQQESLSTVGEPEPTPAPYLDVATFTVAPPAEITAPPRNGDT) are domain II. The domain III, AAA+ region stretch occupies residues 133-349 (RLNSKYSFDN…GTLIRVTAFA (217 aa)). ATP contacts are provided by G177, G179, K180, and T181. Residues 350–473 (SLNRTPVDMP…LTSRIKQNHR (124 aa)) are domain IV, binds dsDNA.

This sequence belongs to the DnaA family. Oligomerizes as a right-handed, spiral filament on DNA at oriC.

Its subcellular location is the cytoplasm. In terms of biological role, plays an essential role in the initiation and regulation of chromosomal replication. ATP-DnaA binds to the origin of replication (oriC) to initiate formation of the DNA replication initiation complex once per cell cycle. Binds the DnaA box (a 9 base pair repeat at the origin) and separates the double-stranded (ds)DNA. Forms a right-handed helical filament on oriC DNA; dsDNA binds to the exterior of the filament while single-stranded (ss)DNA is stabiized in the filament's interior. The ATP-DnaA-oriC complex binds and stabilizes one strand of the AT-rich DNA unwinding element (DUE), permitting loading of DNA polymerase. After initiation quickly degrades to an ADP-DnaA complex that is not apt for DNA replication. Binds acidic phospholipids. The polypeptide is Chromosomal replication initiator protein DnaA (Leifsonia xyli subsp. xyli (strain CTCB07)).